Reading from the N-terminus, the 151-residue chain is Coiled-coil-helix-coiled-coil-helix domain-containing protein 2 (151 aa).

2 disordered regions span residues 1 to 50 (MPRG…AAAP) and 77 to 111 (GHAI…AQQQ). Residues 10-26 (SRMAPPASRAPQMRAAP) show a composition bias toward low complexity. A compositionally biased stretch (pro residues) spans 27–38 (RPAPVAQPPAAA). Low complexity-rich tracts occupy residues 39–50 (PPSAVGSSAAAP) and 100–111 (QEPQGTQPAQQQ). A CHCH domain is found at 111–151 (QQPCLYEIKQFLECAQNQGDIKLCEGFNEVLKQCRLANGLA). Short sequence motifs (cx9C motif) lie at residues 114-124 (CLYEIKQFLEC) and 134-144 (CEGFNEVLKQC). Cystine bridges form between Cys-114/Cys-144 and Cys-124/Cys-134.

Interacts with RBPJ.

Its subcellular location is the nucleus. It is found in the mitochondrion. The protein resides in the mitochondrion intermembrane space. Functionally, transcription factor. Binds to the oxygen responsive element of COX4I2 and activates its transcription under hypoxia conditions (4% oxygen), as well as normoxia conditions (20% oxygen). This is Coiled-coil-helix-coiled-coil-helix domain-containing protein 2 (CHCHD2) from Homo sapiens (Human).